Consider the following 211-residue polypeptide: Pupal cuticle protein G1A (211 aa).

Tandem repeats lie at residues 13 to 16 (AAPA), 21 to 24 (AAPA), 33 to 36 (AAPV), 111 to 114 (AAPV), and 179 to 182 (AAPV).

Its function is as follows. Component of the cuticle of the pupa of Tenebrio molitor. The chain is Pupal cuticle protein G1A from Tenebrio molitor (Yellow mealworm beetle).